The primary structure comprises 258 residues: Hydroxyacylglutathione hydrolase (258 aa).

Zn(2+) contacts are provided by His52, His54, Asp56, His57, His109, Asp126, and His164.

This sequence belongs to the metallo-beta-lactamase superfamily. Glyoxalase II family. As to quaternary structure, monomer. Zn(2+) serves as cofactor.

It carries out the reaction an S-(2-hydroxyacyl)glutathione + H2O = a 2-hydroxy carboxylate + glutathione + H(+). Its pathway is secondary metabolite metabolism; methylglyoxal degradation; (R)-lactate from methylglyoxal: step 2/2. Thiolesterase that catalyzes the hydrolysis of S-D-lactoyl-glutathione to form glutathione and D-lactic acid. In Xylella fastidiosa (strain M23), this protein is Hydroxyacylglutathione hydrolase.